Reading from the N-terminus, the 528-residue chain is Na(+)/H(+) antiporter NhaB (528 aa).

The next 11 helical transmembrane spans lie at 29–49 (LIINPIVFYINPFVAGWLLVI), 52–72 (IFTLAMALKCYPLQPGGLLAI), 95–115 (VLLLLVFMVAGIYFMKQLLLF), 139–159 (AFLSAFLDALTVIAVIIAVAV), 203–223 (LLMHAGVGTALGGVCTMVGEP), 248–268 (VPVFFAGIFTCFLVEKFKIFG), 304–324 (AFIGIWLIVGLALHLASVGLI), 349–369 (EEALPFTALLAVFFAVVAVII), 390–410 (LVIFYIANGLLSMVSDNVFVG), 448–468 (ATPNGQAAFLFLLTSAIAPLI), and 476–496 (VWMALPYTIVLSIVGVLAIEL).

It belongs to the NhaB Na(+)/H(+) (TC 2.A.34) antiporter family.

The protein localises to the cell inner membrane. It carries out the reaction 2 Na(+)(in) + 3 H(+)(out) = 2 Na(+)(out) + 3 H(+)(in). Its function is as follows. Na(+)/H(+) antiporter that extrudes sodium in exchange for external protons. This chain is Na(+)/H(+) antiporter NhaB, found in Shewanella woodyi (strain ATCC 51908 / MS32).